A 116-amino-acid chain; its full sequence is Large ribosomal subunit protein bL19 (116 aa).

It belongs to the bacterial ribosomal protein bL19 family.

Functionally, this protein is located at the 30S-50S ribosomal subunit interface and may play a role in the structure and function of the aminoacyl-tRNA binding site. The protein is Large ribosomal subunit protein bL19 of Mannheimia succiniciproducens (strain KCTC 0769BP / MBEL55E).